We begin with the raw amino-acid sequence, 179 residues long: Inorganic pyrophosphatase (179 aa).

Substrate contacts are provided by Lys30, Arg44, and Tyr56. Residues Asp66, Asp71, and Asp103 each contribute to the Mg(2+) site. Residue Tyr142 coordinates substrate.

It belongs to the PPase family. As to quaternary structure, homohexamer. Requires Mg(2+) as cofactor.

It is found in the cytoplasm. It catalyses the reaction diphosphate + H2O = 2 phosphate + H(+). Its function is as follows. Catalyzes the hydrolysis of inorganic pyrophosphate (PPi) forming two phosphate ions. This is Inorganic pyrophosphatase from Rhodospirillum rubrum (strain ATCC 11170 / ATH 1.1.1 / DSM 467 / LMG 4362 / NCIMB 8255 / S1).